The sequence spans 161 residues: Phosphopantetheine adenylyltransferase (161 aa).

A substrate-binding site is contributed by threonine 10. ATP-binding positions include 10 to 11 (TF) and histidine 18. Residues lysine 42, leucine 74, and arginine 88 each contribute to the substrate site. ATP is bound by residues 89–91 (GVR), glutamate 99, and 123–129 (YIHISST).

Belongs to the bacterial CoaD family. As to quaternary structure, homohexamer. Mg(2+) is required as a cofactor.

Its subcellular location is the cytoplasm. The catalysed reaction is (R)-4'-phosphopantetheine + ATP + H(+) = 3'-dephospho-CoA + diphosphate. The protein operates within cofactor biosynthesis; coenzyme A biosynthesis; CoA from (R)-pantothenate: step 4/5. Reversibly transfers an adenylyl group from ATP to 4'-phosphopantetheine, yielding dephospho-CoA (dPCoA) and pyrophosphate. This Aquifex aeolicus (strain VF5) protein is Phosphopantetheine adenylyltransferase.